The sequence spans 360 residues: Type II methyltransferase M2.ScrFI (360 aa).

Residues 2-360 (LRVFEAFAGY…SLFKELFKSQ (359 aa)) enclose the SAM-dependent MTase C5-type domain. Residue C127 is part of the active site.

The protein belongs to the class I-like SAM-binding methyltransferase superfamily. C5-methyltransferase family.

It catalyses the reaction a 2'-deoxycytidine in DNA + S-adenosyl-L-methionine = a 5-methyl-2'-deoxycytidine in DNA + S-adenosyl-L-homocysteine + H(+). Functionally, a methylase, recognizes the double-stranded sequence 5'-CCNGG-3', methylates C-2 on both strands, and protects the DNA from cleavage by the ScrFI endonuclease. This chain is Type II methyltransferase M2.ScrFI (scrFIBM), found in Lactococcus lactis subsp. cremoris (Streptococcus cremoris).